The chain runs to 509 residues: ATP synthase subunit alpha, mitochondrial (509 aa).

Glycine 171–threonine 178 is a binding site for ATP.

The protein belongs to the ATPase alpha/beta chains family. F-type ATPases have 2 components, CF(1) - the catalytic core - and CF(0) - the membrane proton channel. CF(1) has five subunits: alpha(3), beta(3), gamma(1), delta(1), epsilon(1). CF(0) has three main subunits: a, b and c.

Its subcellular location is the mitochondrion. The protein resides in the mitochondrion inner membrane. Its function is as follows. Mitochondrial membrane ATP synthase (F(1)F(0) ATP synthase or Complex V) produces ATP from ADP in the presence of a proton gradient across the membrane which is generated by electron transport complexes of the respiratory chain. F-type ATPases consist of two structural domains, F(1) - containing the extramembraneous catalytic core, and F(0) - containing the membrane proton channel, linked together by a central stalk and a peripheral stalk. During catalysis, ATP synthesis in the catalytic domain of F(1) is coupled via a rotary mechanism of the central stalk subunits to proton translocation. Subunits alpha and beta form the catalytic core in F(1). Rotation of the central stalk against the surrounding alpha(3)beta(3) subunits leads to hydrolysis of ATP in three separate catalytic sites on the beta subunits. Subunit alpha does not bear the catalytic high-affinity ATP-binding sites. In Oryza sativa subsp. indica (Rice), this protein is ATP synthase subunit alpha, mitochondrial (ATPA).